Consider the following 543-residue polypeptide: Zinc finger CCHC domain-containing protein 7 (543 aa).

Positions 51–71 are disordered; it reads EEEHEEKNSGNSESSSSKPNQ. Residues 59-68 show a composition bias toward low complexity; the sequence is SGNSESSSSK. Glycyl lysine isopeptide (Lys-Gly) (interchain with G-Cter in SUMO2) cross-links involve residues K131, K139, K141, K239, and K254. 3 consecutive CCHC-type zinc fingers follow at residues 241–258, 263–280, and 304–321; these read IICR…NCPL, RRCF…SCPA, and KQCD…ACTE. A Glycyl lysine isopeptide (Lys-Gly) (interchain with G-Cter in SUMO2) cross-link involves residue K339. The CCHC-type 4 zinc finger occupies 348 to 365; the sequence is AYCYHCAQKGHYGHECPE. Residues K412, K417, and K435 each participate in a glycyl lysine isopeptide (Lys-Gly) (interchain with G-Cter in SUMO2) cross-link. Residues 414-543 form a disordered region; the sequence is PYIKAANENP…FLIKQRKKKS (130 aa). 2 stretches are compositionally biased toward basic and acidic residues: residues 441 to 457 and 465 to 475; these read QENK…NRNW and RHREVDEDFPR. K478 is covalently cross-linked (Glycyl lysine isopeptide (Lys-Gly) (interchain with G-Cter in SUMO2)). The span at 479 to 491 shows a compositional bias: polar residues; that stretch reads TYSSPGSFKTQKP. A phosphoserine mark is found at S482 and S485. Glycyl lysine isopeptide (Lys-Gly) (interchain with G-Cter in SUMO2) cross-links involve residues K487, K490, and K493. Residues 493–502 show a composition bias toward basic residues; the sequence is KPFHRSSHYH. Over residues 503 to 515 the composition is skewed to basic and acidic residues; sequence TSREDKSPKEGKR. A Glycyl lysine isopeptide (Lys-Gly) (interchain with G-Cter in SUMO2) cross-link involves residue K537.

In terms of assembly, component of a nucleolar TRAMP-like complex, an ATP-dependent exosome regulatory complex consisting of a helicase (MTREX), an oligadenylate polymerase (TENT4B or TENT4A), and a substrate specific RNA-binding factor (ZCCHC7 or ZCCHC8). Several TRAMP-like complexes exist with specific compositions and are associated with nuclear, or nucleolar RNA exosomes.

Its subcellular location is the nucleus. It localises to the nucleolus. This Homo sapiens (Human) protein is Zinc finger CCHC domain-containing protein 7 (ZCCHC7).